The following is a 166-amino-acid chain: Endoribonuclease YbeY (166 aa).

Zn(2+) is bound by residues H132, H136, and H142.

Belongs to the endoribonuclease YbeY family. Zn(2+) is required as a cofactor.

It localises to the cytoplasm. In terms of biological role, single strand-specific metallo-endoribonuclease involved in late-stage 70S ribosome quality control and in maturation of the 3' terminus of the 16S rRNA. The polypeptide is Endoribonuclease YbeY (Clostridium botulinum (strain ATCC 19397 / Type A)).